The chain runs to 150 residues: Arginine repressor (150 aa).

It belongs to the ArgR family.

Its subcellular location is the cytoplasm. It functions in the pathway amino-acid biosynthesis; L-arginine biosynthesis [regulation]. Regulates arginine biosynthesis genes. The sequence is that of Arginine repressor from Thermoanaerobacter sp. (strain X514).